The chain runs to 350 residues: Succinylglutamate desuccinylase (350 aa).

3 residues coordinate Zn(2+): H71, E74, and H169. Residue E233 is part of the active site.

Belongs to the AspA/AstE family. Succinylglutamate desuccinylase subfamily. Zn(2+) is required as a cofactor.

The catalysed reaction is N-succinyl-L-glutamate + H2O = L-glutamate + succinate. Its pathway is amino-acid degradation; L-arginine degradation via AST pathway; L-glutamate and succinate from L-arginine: step 5/5. Its function is as follows. Transforms N(2)-succinylglutamate into succinate and glutamate. This is Succinylglutamate desuccinylase from Pseudoalteromonas atlantica (strain T6c / ATCC BAA-1087).